The primary structure comprises 129 residues: N16.2 matrix protein (129 aa).

Residues 1-23 form the signal peptide; that stretch reads MKCTLRWTITALVLLGICHLARP. Tandem repeats lie at residues 91–92, 93–94, 95–96, 97–98, and 99–100. A 5 X 2 AA tandem repeats of N-G region spans residues 91–100; the sequence is NGNGDGNGNG.

Belongs to the N16 matrix protein family. As to quaternary structure, heterooligomer; disulfide-linked. Pif97, Pif80, N16 and other proteins form a complex. Component of conchiolin, the organic matrix of nacre. Expressed at extremely high levels in the dorsal region of the mantle, which region may be responsible for the nacreous layer formation, but only in trace amounts at the mantle edge, which region may be responsible for the prismatic layer formation.

It is found in the secreted. It localises to the extracellular space. The protein resides in the extracellular matrix. Its function is as follows. May be specifically involved in the formation of the nacreous layer. In Pinctada fucata (Akoya pearl oyster), this protein is N16.2 matrix protein.